The following is a 272-amino-acid chain: Glycosylphosphatidylinositol anchor biosynthesis protein 11 (272 aa).

A compositionally biased stretch (polar residues) spans 21–31; sequence QSTSTTKSTPG. The disordered stretch occupies residues 21 to 48; the sequence is QSTSTTKSTPGSQATESSTTTAGSSSSL. Over residues 32–48 the composition is skewed to low complexity; it reads SQATESSTTTAGSSSSL. The next 5 membrane-spanning stretches (helical) occupy residues 91 to 111, 145 to 165, 177 to 197, 215 to 235, and 248 to 268; these read VMLN…LLCL, LLAS…MVLF, FLCA…VHGV, TFGG…PIPL, and ILCG…TLFW.

This sequence belongs to the PIGF family.

Its subcellular location is the endoplasmic reticulum membrane. Its pathway is glycolipid biosynthesis; glycosylphosphatidylinositol-anchor biosynthesis. Acts in the GPI biosynthetic pathway between GlcNAc-PI synthesis and GPI transfer to protein. The protein is Glycosylphosphatidylinositol anchor biosynthesis protein 11 (gpi-11) of Neurospora crassa (strain ATCC 24698 / 74-OR23-1A / CBS 708.71 / DSM 1257 / FGSC 987).